The sequence spans 421 residues: MEKMHITNQEHDAFVKSHPNGDLLQLTKWAETKKLTGWYARRIAVGRDGEVQGVAQLLFKKVPKLPYTLCYISRGFVVDYSNKEALNALLDSAKEIAKAEKAYAIKIDPDVEVDKGTDALQNLKALGFKHKGFKEGLSKDYIQPRMTMITPIDKNDDELLNSFERRNRSKVRLALKRGTTVERSDREGLKTFAELMKITGERDGFLTRDISYFENIYDALHEDGDAELFLVKLDPKENIAKVNQELNELHAEIAKWQQKMETSEKQAKKAQNMINDAQNKIAKNEDLKRDLEALEKEHPEGIYLSGALLMFAGSKSYYLYGASSNEFRDFLPNHHMQYTMMKYAREHGATTYDFGGTDNDPDKDSEHYGLWAFKKVWGTYLSEKIGEFDYVLNQPLYQLIEQVKPRLTKAKIKISRKLKRK.

This sequence belongs to the FemABX family. As to quaternary structure, monomer.

The protein resides in the cytoplasm. It carries out the reaction beta-D-GlcNAc-(1-&gt;4)-Mur2Ac(oyl-L-Ala-D-isoglutaminyl-L-Lys-D-Ala-D-Ala)-di-trans,octa-cis-undecaprenyl diphosphate + glycyl-tRNA(Gly) = beta-D-GlcNAc-(1-&gt;4)-Mur2Ac(oyl-L-Ala-D-isoglutaminyl-L-Lys-(N(6)-Gly)-D-Ala-D-Ala)-di-trans,octa-cis-undecaprenyl diphosphate + tRNA(Gly) + H(+). Functionally, catalyzes the incorporation of the first glycine of the pentaglycine interpeptide bridge, which is characteristic of the S.aureus peptidoglycan. This glycine is added to the epsilon-amino group of the L-lysine of the membrane-bound lipid II intermediate (GlcNAc-(beta-1,4)-N-acetylmuramic acid(-L-Ala-D-iGln-L-Lys-D-Ala-D-Ala)-pyrophosphoryl-undecaprenol), using glycyl-tRNA(Gly) as donor, in a ribosome-independent mechanism. This Staphylococcus aureus (strain MSSA476) protein is Lipid II:glycine glycyltransferase (femX).